The following is a 97-amino-acid chain: ESAT-6-like protein EsxS (97 aa).

Belongs to the WXG100 family. CFP-10 subfamily. Forms a tight complex with EsxR. Exists in heterodimeric and heterotetrameric forms.

It localises to the secreted. The polypeptide is ESAT-6-like protein EsxS (Mycobacterium tuberculosis (strain ATCC 25618 / H37Rv)).